Consider the following 560-residue polypeptide: Proline--tRNA ligase (560 aa).

The protein belongs to the class-II aminoacyl-tRNA synthetase family. ProS type 1 subfamily. In terms of assembly, homodimer.

It localises to the cytoplasm. It catalyses the reaction tRNA(Pro) + L-proline + ATP = L-prolyl-tRNA(Pro) + AMP + diphosphate. Functionally, catalyzes the attachment of proline to tRNA(Pro) in a two-step reaction: proline is first activated by ATP to form Pro-AMP and then transferred to the acceptor end of tRNA(Pro). As ProRS can inadvertently accommodate and process non-cognate amino acids such as alanine and cysteine, to avoid such errors it has two additional distinct editing activities against alanine. One activity is designated as 'pretransfer' editing and involves the tRNA(Pro)-independent hydrolysis of activated Ala-AMP. The other activity is designated 'posttransfer' editing and involves deacylation of mischarged Ala-tRNA(Pro). The misacylated Cys-tRNA(Pro) is not edited by ProRS. The chain is Proline--tRNA ligase from Vesicomyosocius okutanii subsp. Calyptogena okutanii (strain HA).